The sequence spans 567 residues: 2-succinyl-5-enolpyruvyl-6-hydroxy-3-cyclohexene-1-carboxylate synthase (567 aa).

This sequence belongs to the TPP enzyme family. MenD subfamily. As to quaternary structure, homodimer. It depends on Mg(2+) as a cofactor. Requires Mn(2+) as cofactor. Thiamine diphosphate serves as cofactor.

It carries out the reaction isochorismate + 2-oxoglutarate + H(+) = 5-enolpyruvoyl-6-hydroxy-2-succinyl-cyclohex-3-ene-1-carboxylate + CO2. Its pathway is quinol/quinone metabolism; 1,4-dihydroxy-2-naphthoate biosynthesis; 1,4-dihydroxy-2-naphthoate from chorismate: step 2/7. The protein operates within quinol/quinone metabolism; menaquinone biosynthesis. Its function is as follows. Catalyzes the thiamine diphosphate-dependent decarboxylation of 2-oxoglutarate and the subsequent addition of the resulting succinic semialdehyde-thiamine pyrophosphate anion to isochorismate to yield 2-succinyl-5-enolpyruvyl-6-hydroxy-3-cyclohexene-1-carboxylate (SEPHCHC). This Yersinia pseudotuberculosis serotype IB (strain PB1/+) protein is 2-succinyl-5-enolpyruvyl-6-hydroxy-3-cyclohexene-1-carboxylate synthase.